Here is a 649-residue protein sequence, read N- to C-terminus: Endoglucanase D (649 aa).

The signal sequence occupies residues 1–41 (MSRMTLKSSMKKRVLSLLIAVVFLSLTGVFPSGLIETKVSA). Catalysis depends on Asp-201, which acts as the Nucleophile. Active-site residues include His-516 and Asp-546. The active-site Proton donor is Glu-555. The 71-residue stretch at 579–649 (NEVLYGDVND…LIRVIEKLPI (71 aa)) folds into the Dockerin domain.

It belongs to the glycosyl hydrolase 9 (cellulase E) family. The cofactor is Ca(2+).

It catalyses the reaction Endohydrolysis of (1-&gt;4)-beta-D-glucosidic linkages in cellulose, lichenin and cereal beta-D-glucans.. In terms of biological role, this enzyme catalyzes the endohydrolysis of 1,4-beta-glucosidic linkages in cellulose, lichenin and cereal beta-D-glucans. In Acetivibrio thermocellus (strain ATCC 27405 / DSM 1237 / JCM 9322 / NBRC 103400 / NCIMB 10682 / NRRL B-4536 / VPI 7372) (Clostridium thermocellum), this protein is Endoglucanase D (celD).